Here is a 697-residue protein sequence, read N- to C-terminus: Glycine--tRNA ligase beta subunit (697 aa).

It belongs to the class-II aminoacyl-tRNA synthetase family. In terms of assembly, tetramer of two alpha and two beta subunits.

It localises to the cytoplasm. It catalyses the reaction tRNA(Gly) + glycine + ATP = glycyl-tRNA(Gly) + AMP + diphosphate. The sequence is that of Glycine--tRNA ligase beta subunit from Cereibacter sphaeroides (strain ATCC 17023 / DSM 158 / JCM 6121 / CCUG 31486 / LMG 2827 / NBRC 12203 / NCIMB 8253 / ATH 2.4.1.) (Rhodobacter sphaeroides).